The primary structure comprises 85 residues: RNA-binding protein Hfq (85 aa).

In terms of domain architecture, Sm spans 10–69; the sequence is DPFLNILRKEHVPVSIYLVNGIKLQGQIESFDQYVVLLKNTVTQMVYKHAISTVVPARPV.

The protein belongs to the Hfq family. In terms of assembly, homohexamer.

In terms of biological role, RNA chaperone that binds small regulatory RNA (sRNAs) and mRNAs to facilitate mRNA translational regulation in response to envelope stress, environmental stress and changes in metabolite concentrations. Also binds with high specificity to tRNAs. The chain is RNA-binding protein Hfq from Laribacter hongkongensis (strain HLHK9).